Consider the following 506-residue polypeptide: MIYPIPNSETSTVHFKDVYDNYIGGQWMKPHSGEYFSNTSPVNGLVFCRVARSSSQDVELALDAAHNALESWSTTSAVERSNILLRIADRIESNLETLAIVESWDNGKPIRETLAADLPLTIDHFRYFAACIRSQEGAASELDSRTLTYHLPEPIGVVGQIIPWNFPLLMAAWKLAPALAAGCTVVLKPAEQTPVSILFLMEIIGDLIPAGVINVVNGFGSEAGNALATSQRIDKLAFTGSTEIGNHILKCAADNLIPSTIELGGKSPNIYFPDIFSHEDQYLDKCIEGALLAFFNQGEVCTCPSRILVHESIYEKFIAKIIERVALIKQGNPLDTETQIGAQVSKEQYDKILGYIQIGKDEGAELIFGGHPNNQENYLSGGYYIKPTLFFGHNQMHIFQEEIFGPVIAITKFKDEIEALHLANDTVYGLGAGVWTRDINIAHRMAKNIKAGRVWVNCYHAYPAHAAFGGYKKSGIGRETHKLTLSHYQNIKNVLISHEIHPLGLF.

240-245 (GSTEIG) is an NAD(+) binding site. Active-site residues include Glu262 and Cys301.

It belongs to the aldehyde dehydrogenase family.

It carries out the reaction an aldehyde + NAD(+) + H2O = a carboxylate + NADH + 2 H(+). It functions in the pathway alcohol metabolism; ethanol degradation; acetate from ethanol: step 2/2. Its function is as follows. May be involved in V.cholerae virulence, as its expression is under the control of ToxR, a transcriptional activator of several genes associated with virulence. This chain is Aldehyde dehydrogenase (aldA), found in Vibrio cholerae serotype O1 (strain ATCC 39541 / Classical Ogawa 395 / O395).